The sequence spans 36 residues: Pancreatic polypeptide (36 aa).

Tyr-36 carries the tyrosine amide modification.

This sequence belongs to the NPY family.

It is found in the secreted. Its function is as follows. Hormone secreted by pancreatic cells that acts as a regulator of pancreatic and gastrointestinal functions. This chain is Pancreatic polypeptide (PPY), found in Larus argentatus (Herring gull).